The primary structure comprises 289 residues: NAD kinase (289 aa).

Catalysis depends on D82, which acts as the Proton acceptor. NAD(+)-binding positions include 82 to 83 (DG), R87, 150 to 151 (NE), K161, R178, D180, 191 to 196 (TAYAMS), A215, and Q250.

It belongs to the NAD kinase family. A divalent metal cation serves as cofactor.

The protein resides in the cytoplasm. It carries out the reaction NAD(+) + ATP = ADP + NADP(+) + H(+). In terms of biological role, involved in the regulation of the intracellular balance of NAD and NADP, and is a key enzyme in the biosynthesis of NADP. Catalyzes specifically the phosphorylation on 2'-hydroxyl of the adenosine moiety of NAD to yield NADP. This Methanosarcina mazei (strain ATCC BAA-159 / DSM 3647 / Goe1 / Go1 / JCM 11833 / OCM 88) (Methanosarcina frisia) protein is NAD kinase.